A 427-amino-acid polypeptide reads, in one-letter code: Outer capsid protein P8 (427 aa).

It belongs to the phytoreovirus outer capsid protein P8 family. As to quaternary structure, homotrimer. Homomultimer.

The protein resides in the virion. It is found in the host cytoplasm. Functionally, capsid protein which self-assembles to form the outer icosahedral capsid with a T=13 symmetry, about 70 nm in diameter and consisting of 780 molecules capsid proteins. In Catharanthus roseus (Madagascar periwinkle), this protein is Outer capsid protein P8.